Here is a 298-residue protein sequence, read N- to C-terminus: Glycine--tRNA ligase alpha subunit (298 aa).

This sequence belongs to the class-II aminoacyl-tRNA synthetase family. In terms of assembly, tetramer of two alpha and two beta subunits.

It is found in the cytoplasm. The enzyme catalyses tRNA(Gly) + glycine + ATP = glycyl-tRNA(Gly) + AMP + diphosphate. This is Glycine--tRNA ligase alpha subunit (glyQ) from Helicobacter pylori (strain J99 / ATCC 700824) (Campylobacter pylori J99).